An 83-amino-acid chain; its full sequence is Defensin-2 (83 aa).

Residues 1 to 33 form the signal peptide; the sequence is MAGKGVGTPLSALFLLVLLVVTIGMMEVQVAEG. Cystine bridges form between Cys-36/Cys-82, Cys-47/Cys-67, Cys-53/Cys-76, and Cys-57/Cys-78.

The protein belongs to the DEFL family.

The protein resides in the secreted. Plant defense peptide. Has antifungal activity. The polypeptide is Defensin-2 (Pinus sylvestris (Scotch pine)).